Consider the following 361-residue polypeptide: Probable dual-specificity RNA methyltransferase RlmN (361 aa).

E91 serves as the catalytic Proton acceptor. The Radical SAM core domain occupies 97-329 (QHYGLSVCVT…KKKGVNCVVR (233 aa)). A disulfide bridge links C104 with C340. C111, C115, and C118 together coordinate [4Fe-4S] cluster. S-adenosyl-L-methionine is bound by residues 163 to 164 (GE), S195, 218 to 220 (SLH), and N296. The S-methylcysteine intermediate role is filled by C340.

This sequence belongs to the radical SAM superfamily. RlmN family. Requires [4Fe-4S] cluster as cofactor.

It is found in the cytoplasm. The catalysed reaction is adenosine(2503) in 23S rRNA + 2 reduced [2Fe-2S]-[ferredoxin] + 2 S-adenosyl-L-methionine = 2-methyladenosine(2503) in 23S rRNA + 5'-deoxyadenosine + L-methionine + 2 oxidized [2Fe-2S]-[ferredoxin] + S-adenosyl-L-homocysteine. It catalyses the reaction adenosine(37) in tRNA + 2 reduced [2Fe-2S]-[ferredoxin] + 2 S-adenosyl-L-methionine = 2-methyladenosine(37) in tRNA + 5'-deoxyadenosine + L-methionine + 2 oxidized [2Fe-2S]-[ferredoxin] + S-adenosyl-L-homocysteine. Its function is as follows. Specifically methylates position 2 of adenine 2503 in 23S rRNA and position 2 of adenine 37 in tRNAs. The polypeptide is Probable dual-specificity RNA methyltransferase RlmN (Streptococcus pneumoniae serotype 19F (strain G54)).